Reading from the N-terminus, the 229-residue chain is Translation initiation factor 6 (229 aa).

It belongs to the eIF-6 family.

Binds to the 50S ribosomal subunit and prevents its association with the 30S ribosomal subunit to form the 70S initiation complex. This Thermococcus kodakarensis (strain ATCC BAA-918 / JCM 12380 / KOD1) (Pyrococcus kodakaraensis (strain KOD1)) protein is Translation initiation factor 6.